The primary structure comprises 91 residues: Small ribosomal subunit protein uS19 (91 aa).

This sequence belongs to the universal ribosomal protein uS19 family.

Protein S19 forms a complex with S13 that binds strongly to the 16S ribosomal RNA. This Halorhodospira halophila (strain DSM 244 / SL1) (Ectothiorhodospira halophila (strain DSM 244 / SL1)) protein is Small ribosomal subunit protein uS19.